The primary structure comprises 207 residues: Large ribosomal subunit protein uL4 (207 aa).

Positions 49–78 are disordered; that stretch reads HAVKNRSAVSGGGRKPWRQKGTGRARQGSI.

The protein belongs to the universal ribosomal protein uL4 family. As to quaternary structure, part of the 50S ribosomal subunit.

Its function is as follows. One of the primary rRNA binding proteins, this protein initially binds near the 5'-end of the 23S rRNA. It is important during the early stages of 50S assembly. It makes multiple contacts with different domains of the 23S rRNA in the assembled 50S subunit and ribosome. Functionally, forms part of the polypeptide exit tunnel. This Streptococcus sanguinis (strain SK36) protein is Large ribosomal subunit protein uL4.